Reading from the N-terminus, the 149-residue chain is MQVNIFCIQKSDEFKTWSEKYSKLISKYATLKEINVFNKKIALAQNLNAIEAKKSYEEAFMPYKKGYCIALDEKGKDLTSIEFAKLIQDKNELSFFIGGAYGLREEFNQSLDFRLSLSKLTLAHQFVKTLLLEQIYRAFCINNNHPYHK.

Residues Leu-71, Gly-98, and 117-122 (LSKLTL) contribute to the S-adenosyl-L-methionine site.

Belongs to the RNA methyltransferase RlmH family. In terms of assembly, homodimer.

Its subcellular location is the cytoplasm. It catalyses the reaction pseudouridine(1915) in 23S rRNA + S-adenosyl-L-methionine = N(3)-methylpseudouridine(1915) in 23S rRNA + S-adenosyl-L-homocysteine + H(+). Functionally, specifically methylates the pseudouridine at position 1915 (m3Psi1915) in 23S rRNA. This chain is Ribosomal RNA large subunit methyltransferase H, found in Campylobacter jejuni subsp. jejuni serotype O:6 (strain 81116 / NCTC 11828).